A 259-amino-acid chain; its full sequence is Glutamate racemase (259 aa).

Substrate is bound by residues 12–13 (DS) and 44–45 (YG). The Proton donor/acceptor role is filled by C75. 76 to 77 (NT) serves as a coordination point for substrate. C186 serves as the catalytic Proton donor/acceptor. Residue 187 to 188 (TH) participates in substrate binding.

The protein belongs to the aspartate/glutamate racemases family.

It catalyses the reaction L-glutamate = D-glutamate. Its pathway is cell wall biogenesis; peptidoglycan biosynthesis. Provides the (R)-glutamate required for cell wall biosynthesis. In Clostridium novyi (strain NT), this protein is Glutamate racemase.